The primary structure comprises 59 residues: Putative potassium channel toxin Ts23 (59 aa).

An N-terminal signal peptide occupies residues 1–22 (MKAFYGILIIFILISMLDLSQQ). 3 disulfide bridges follow: cysteine 29–cysteine 50, cysteine 35–cysteine 55, and cysteine 39–cysteine 57.

It belongs to the short scorpion toxin superfamily. Potassium channel inhibitor family. Alpha-KTx 04 subfamily. Expressed by the venom gland.

Its subcellular location is the secreted. Functionally, potently blocks Kv1.1/KCNA1 (85%), Kv1.2/KCNA2 (91%), Kv1.3/KCNA3 (89%), Kv1.6/KCNA6 (94%), and Shaker (97%). The polypeptide is Putative potassium channel toxin Ts23 (Tityus serrulatus (Brazilian scorpion)).